Reading from the N-terminus, the 715-residue chain is Integrator complex subunit 13 (715 aa).

2 disordered regions span residues 572-612 (KPPE…SERI) and 626-659 (AEVIKDSPDSPEPPNKKPHIVIEDTGPAEKSKGP). The Nuclear localization signal (NLS) motif lies at 581 to 591 (KRGRKREDKEE). Positions 658-703 (GPMSLLSLWSSRINTANSRKHQEFVGRLNSVNNKAELYQHLKEENG) are cleavage module binding motif (CMBM).

This sequence belongs to the Integrator subunit 13 family. Component of the Integrator complex, composed of core subunits INTS1, INTS2, INTS3, INTS4, INTS5, INTS6, INTS7, INTS8, INTS9/RC74, INTS10, INTS11/CPSF3L, INTS12, INTS13, INTS14 and INTS15. The core complex associates with protein phosphatase 2A subunits PPP2CA and PPP2R1A, to form the Integrator-PP2A (INTAC) complex. INTS13 is part of the tail subcomplex, composed of INTS10, INTS13, INTS14 and INTS15.

It is found in the nucleus. The protein resides in the cytoplasm. In terms of biological role, component of the integrator complex, a multiprotein complex that terminates RNA polymerase II (Pol II) transcription in the promoter-proximal region of genes. The integrator complex provides a quality checkpoint during transcription elongation by driving premature transcription termination of transcripts that are unfavorably configured for transcriptional elongation: the complex terminates transcription by (1) catalyzing dephosphorylation of the C-terminal domain (CTD) of Pol II subunit POLR2A/RPB1 and SUPT5H/SPT5, (2) degrading the exiting nascent RNA transcript via endonuclease activity and (3) promoting the release of Pol II from bound DNA. The integrator complex is also involved in terminating the synthesis of non-coding Pol II transcripts, such as enhancer RNAs (eRNAs), small nuclear RNAs (snRNAs), telomerase RNAs and long non-coding RNAs (lncRNAs). Within the integrator complex, INTS13 is part of the integrator tail module and acts as a platform for the recruitment of transcription factors at promoters. Plays a role in gastrulation and early embryogenesis. This Xenopus laevis (African clawed frog) protein is Integrator complex subunit 13.